A 504-amino-acid polypeptide reads, in one-letter code: Hexose transporter 1 (504 aa).

At 1–29 the chain is on the cytoplasmic side; it reads MTKSSKDICSENEGKKNGKSGFFSTSFKY. Residues 30 to 50 form a helical membrane-spanning segment; the sequence is VLSACIASFIFGYQVSVLNTI. At 51–78 the chain is on the extracellular side; it reads KNFIVVEFEWCKGEKDRLNCSNNTIQSS. A disulfide bond links Cys-61 and Cys-70. The helical transmembrane segment at 79 to 99 threads the bilayer; sequence FLLASVFIGAVLGCGFSGYLV. Over 100 to 104 the chain is Cytoplasmic; the sequence is QFGRR. Residues 105 to 125 traverse the membrane as a helical segment; that stretch reads LSLLIIYNFFFLVSILTSITH. Over 126–129 the chain is Extracellular; sequence HFHT. Residues 130 to 150 form a helical membrane-spanning segment; that stretch reads ILFARLLSGFGIGLVTVSVPM. The Cytoplasmic portion of the chain corresponds to 151 to 165; sequence YISEMTHKDKKGAYG. Residues 166–186 traverse the membrane as a helical segment; sequence VMHQLFITFGIFVAVMLGLAM. Gln-169 contacts alpha-D-glucose. Residue Gln-169 coordinates beta-D-glucose. Over 187 to 207 the chain is Extracellular; it reads GEGPKADSTEPLTSFAKLWWR. The chain crosses the membrane as a helical span at residues 208 to 228; sequence LMFLFPSVISLIGILALVVFF. Over 229–293 the chain is Cytoplasmic; that stretch reads KEETPYFLFE…SALKIPSYRY (65 aa). The helical transmembrane segment at 294-314 threads the bilayer; that stretch reads VIILGCLLSGLQQFTGINVLV. Residues Gln-305, Gln-306, and Asn-311 each contribute to the alpha-D-glucose site. Gln-305 contributes to the beta-D-glucose binding site. Position 311 (Asn-311) interacts with beta-D-glucose. The Extracellular portion of the chain corresponds to 315 to 331; the sequence is SNSNELYKEFLDSHLIT. The helical transmembrane segment at 332–352 threads the bilayer; sequence ILSVVMTAVNFLMTFPAIYIV. Asn-341 is a binding site for beta-D-glucose. At 353-358 the chain is on the cytoplasmic side; that stretch reads EKLGRK. A helical membrane pass occupies residues 359–379; it reads TLLLWGCVGVLVAYLPTAIAN. Residues 380–392 are Extracellular-facing; it reads EINRNSNFVKILS. Residues 393–413 form a helical membrane-spanning segment; the sequence is IVATFVMIISFAVSYGPVLWI. Position 412 (Trp-412) interacts with alpha-D-glucose. The Cytoplasmic segment spans residues 414–429; it reads YLHEMFPSEIKDSAAS. A helical transmembrane segment spans residues 430-450; that stretch reads LASLVNWVCAIIVVFPSDIII. At 451–455 the chain is on the extracellular side; the sequence is KKSPS. The helical transmembrane segment at 456 to 476 threads the bilayer; that stretch reads ILFIVFSVMSILTFFFIFFFI. Topologically, residues 477–504 are cytoplasmic; the sequence is KETKGGEIGTSPYITMEERQKHMTKSVV.

Belongs to the major facilitator superfamily. Sugar transporter (TC 2.A.1.1) family. In terms of assembly, homodimer.

The protein localises to the cell membrane. The catalysed reaction is D-glucose(out) = D-glucose(in). It catalyses the reaction D-fructose(out) = D-fructose(in). The enzyme catalyses D-galactose(in) = D-galactose(out). It carries out the reaction D-mannose(out) = D-mannose(in). The catalysed reaction is D-glucosamine(out) = D-glucosamine(in). It catalyses the reaction D-xylose(out) = D-xylose(in). Inhibited by cytochalasin B. Inhibited by compound 3361 (3-O-((undec-10-en)-1-yl)-D-glucose). Inhibited by compound HTI-1. Functionally, sodium-independent facilitative hexose transporter. Can transport D-glucose and D-fructose. Can transport D-mannose, D-galactose, D-xylose and D-glucosamine. This is Hexose transporter 1 from Plasmodium falciparum (isolate 3D7).